The chain runs to 962 residues: Protein lin-36 (962 aa).

2 disordered regions span residues Met1–Gly53 and Thr74–Glu99. Over residues Asp23–Glu40 the composition is skewed to basic and acidic residues. The segment covering Thr74–Gln95 has biased composition (polar residues). The THAP-type zinc finger occupies Leu161–Ile249. Composition is skewed to basic and acidic residues over residues Lys452–Glu472 and Ser534–Phe570. 4 disordered regions span residues Lys452–Gln575, Ile612–Arg676, Gln744–Ser788, and Asp932–Gln962. Positions Ser626–Gln637 are enriched in low complexity. Residues Lys647–Lys658 show a composition bias toward basic and acidic residues. Over residues Gln939–Gln951 the composition is skewed to low complexity. The span at Phe952–Gln962 shows a compositional bias: polar residues.

In terms of tissue distribution, expressed in vulval precursor P(3-8).p cells and their descendants, neurons of the head, tail and ventral cord, hypodermal and intestinal cells and germline cells.

The protein localises to the nucleus. Functionally, required to negatively regulate vulval development. Antagonizes Ras-mediated vulval induction. Acts cell autonomously. The polypeptide is Protein lin-36 (lin-36) (Caenorhabditis elegans).